Consider the following 741-residue polypeptide: Transketolase, chloroplastic (741 aa).

Positions 1–19 (MAASSSLSTLSHHQTLLSH) are enriched in low complexity. Residues 1–33 (MAASSSLSTLSHHQTLLSHPKTHLPTTPASSLL) form a disordered region. A chloroplast-targeting transit peptide spans 1 to 66 (MAASSSLSTL…VGSASAVVRA (66 aa)). The span at 24–33 (LPTTPASSLL) shows a compositional bias: polar residues. Histidine 103 serves as a coordination point for substrate. Thiamine diphosphate is bound by residues histidine 143 and 192–194 (GPL). Aspartate 233 provides a ligand contact to Mg(2+). Glycine 234 and asparagine 263 together coordinate thiamine diphosphate. Asparagine 263 and isoleucine 265 together coordinate Mg(2+). Substrate contacts are provided by histidine 340, arginine 434, and serine 461. Histidine 340 is a binding site for thiamine diphosphate. Glutamate 488 and phenylalanine 515 together coordinate thiamine diphosphate. Catalysis depends on glutamate 488, which acts as the Proton donor. Histidine 539, aspartate 547, and arginine 598 together coordinate substrate.

The protein belongs to the transketolase family. In terms of assembly, homodimer. The cofactor is Mg(2+). Ca(2+) is required as a cofactor. Requires Mn(2+) as cofactor. Co(2+) serves as cofactor. It depends on thiamine diphosphate as a cofactor.

It is found in the plastid. It localises to the chloroplast thylakoid membrane. The catalysed reaction is D-sedoheptulose 7-phosphate + D-glyceraldehyde 3-phosphate = aldehydo-D-ribose 5-phosphate + D-xylulose 5-phosphate. It participates in carbohydrate biosynthesis; Calvin cycle. In terms of biological role, catalyzes the reversible transfer of a two-carbon ketol group from fructose-6-phosphate or sedoheptulose-7-phosphate to glyceraldehyde-3-phosphate to yield xylulose-5-phosphate and erythrose-4-phosphate or ribose-5-phosphate, respectively. This chain is Transketolase, chloroplastic, found in Spinacia oleracea (Spinach).